We begin with the raw amino-acid sequence, 440 residues long: Trigger factor (440 aa).

The region spanning 163 to 248 is the PPIase FKBP-type domain; it reads GDTVVIDFKG…VHEVKTKELP (86 aa).

It belongs to the FKBP-type PPIase family. Tig subfamily.

The protein resides in the cytoplasm. It carries out the reaction [protein]-peptidylproline (omega=180) = [protein]-peptidylproline (omega=0). Involved in protein export. Acts as a chaperone by maintaining the newly synthesized protein in an open conformation. Functions as a peptidyl-prolyl cis-trans isomerase. The polypeptide is Trigger factor (Lactiplantibacillus plantarum (strain ATCC BAA-793 / NCIMB 8826 / WCFS1) (Lactobacillus plantarum)).